The sequence spans 496 residues: Cytochrome P450 71D180 (496 aa).

A helical; Signal-anchor for type II membrane protein transmembrane segment spans residues 1-21 (MDISISWVVIIVFVLSYLILM). A heme-binding site is contributed by C435.

The protein belongs to the cytochrome P450 family. It depends on heme as a cofactor. Mostly expressed in flowers and, to a lower extent, in leaves, especially in glandular trichomes.

Its subcellular location is the membrane. It catalyses the reaction (4R)-limonene + reduced [NADPH--hemoprotein reductase] + O2 = (1R,5S)-carveol + oxidized [NADPH--hemoprotein reductase] + H2O + H(+). The enzyme catalyses (4S)-limonene + reduced [NADPH--hemoprotein reductase] + O2 = (1S,5R)-carveol + oxidized [NADPH--hemoprotein reductase] + H2O + H(+). The catalysed reaction is gamma-terpinene + 2 reduced [NADPH--hemoprotein reductase] + 2 O2 = carvacrol + 2 oxidized [NADPH--hemoprotein reductase] + 3 H2O + 2 H(+). The protein operates within secondary metabolite biosynthesis; terpenoid biosynthesis. Its function is as follows. Involved in the biosynthesis of phenolic monoterpenes natural products thymol and carvacrol which have a broad range of biological activities acting as antimicrobial compounds, insecticides, antioxidants and pharmaceutical agents. Catalyzes the C2-hydroxylation of gamma-terpinene to produce carvacrol. Mediates also the C6-hydroxylation of (4S)-limonene and (4R)-limonene to form carveol. The protein is Cytochrome P450 71D180 of Thymus vulgaris (Thyme).